The primary structure comprises 185 residues: Elongation factor P (185 aa).

This sequence belongs to the elongation factor P family.

The protein localises to the cytoplasm. It participates in protein biosynthesis; polypeptide chain elongation. Functionally, involved in peptide bond synthesis. Stimulates efficient translation and peptide-bond synthesis on native or reconstituted 70S ribosomes in vitro. Probably functions indirectly by altering the affinity of the ribosome for aminoacyl-tRNA, thus increasing their reactivity as acceptors for peptidyl transferase. In Synechococcus elongatus (strain ATCC 33912 / PCC 7942 / FACHB-805) (Anacystis nidulans R2), this protein is Elongation factor P (efp).